A 226-amino-acid chain; its full sequence is Late protein I226R (226 aa).

An N-terminal signal peptide occupies residues 1–16 (MKMETFLVCLFHNADG). Asparagine 142 and asparagine 164 each carry an N-linked (GlcNAc...) asparagine; by host glycan.

It belongs to the asfivirus I226R family.

In terms of biological role, plays a role in the inhibition of host NF-kappa-B and IRF3 signaling pathways. Mechanistically, promotes the degradation of host IKBKG through enhancing its ubiquitination leading to inhibition of both pathways. This chain is Late protein I226R, found in Ornithodoros (relapsing fever ticks).